The sequence spans 314 residues: Homoserine O-succinyltransferase (314 aa).

C142 serves as the catalytic Acyl-thioester intermediate. Substrate is bound by residues K163 and S192. Catalysis depends on H235, which acts as the Proton acceptor. Residue E237 is part of the active site. R249 is a substrate binding site.

The protein belongs to the MetA family.

The protein resides in the cytoplasm. The enzyme catalyses L-homoserine + succinyl-CoA = O-succinyl-L-homoserine + CoA. It participates in amino-acid biosynthesis; L-methionine biosynthesis via de novo pathway; O-succinyl-L-homoserine from L-homoserine: step 1/1. Functionally, transfers a succinyl group from succinyl-CoA to L-homoserine, forming succinyl-L-homoserine. This Photobacterium profundum (strain SS9) protein is Homoserine O-succinyltransferase.